Here is a 323-residue protein sequence, read N- to C-terminus: Cyclin-dependent kinase 1 (323 aa).

Residues 4-306 (YQKIEKIGEG…AKQACMHPYF (303 aa)) form the Protein kinase domain. Residues 10–18 (IGEGTYGVV) and lysine 34 each bind ATP. Position 14 is a phosphothreonine (threonine 14). At tyrosine 15 the chain carries Phosphotyrosine. The active-site Proton acceptor is the aspartate 147. Threonine 180 is modified (phosphothreonine; by CAK).

It belongs to the protein kinase superfamily. CMGC Ser/Thr protein kinase family. CDC2/CDKX subfamily. In terms of assembly, forms a stable but non-covalent complex with a regulatory subunit (SUC1) and with a cyclin.

The enzyme catalyses L-seryl-[protein] + ATP = O-phospho-L-seryl-[protein] + ADP + H(+). It carries out the reaction L-threonyl-[protein] + ATP = O-phospho-L-threonyl-[protein] + ADP + H(+). With respect to regulation, phosphorylation at Thr-14 or Tyr-15 inactivates the enzyme, while phosphorylation at Thr-180 activates it. Cyclin-dependent kinase that acts as a master regulator of the mitotic and meiotic cell cycles. This is Cyclin-dependent kinase 1 from Emericella nidulans (strain FGSC A4 / ATCC 38163 / CBS 112.46 / NRRL 194 / M139) (Aspergillus nidulans).